We begin with the raw amino-acid sequence, 397 residues long: Translocase of chloroplast 34 homolog, chloroplastic (397 aa).

A disordered region spans residues 1 to 72 (MAQPPRPAEE…SQPWAGLNRL (72 aa)). Composition is skewed to acidic residues over residues 10-32 (EYDD…DDES) and 44-63 (AGDE…DEDS). Positions 90–321 (RKQLTVLLLG…YKYHPRLSSK (232 aa)) constitute an AIG1-type G domain. The tract at residues 99-106 (GKSSVGKS) is G1. GTP-binding positions include 102–107 (SVGKSS) and 121–126 (QAFKLQ). Ser106 provides a ligand contact to Mg(2+). The homodimerization stretch occupies residues 121–124 (QAFK). Residues 126–130 (QADTD) are G2. The tract at residues 155 to 158 (DTCG) is G3. The tract at residues 193–198 (RLDLYR) is homodimerization. The G4 stretch occupies residues 227 to 230 (THAN). GTP contacts are provided by residues His228 and 271–272 (EN). A G5 region spans residues 271–273 (ENS). A helical membrane pass occupies residues 329–349 (LLPVAIAAEVLFYRRFLHPRL). The AKR2A-binding sequence (ABS) required for chloroplast outer envelope membrane targeting signature appears at 350 to 358 (DDNQRRVER).

This sequence belongs to the TRAFAC class TrmE-Era-EngA-EngB-Septin-like GTPase superfamily. AIG1/Toc34/Toc159-like paraseptin GTPase family. TOC34 subfamily. As to quaternary structure, homodimer, heterodimer with other TOC proteins, and monomer. Part of the TOC core complex that includes 1 protein for the specific recognition of transit peptides surrounded by a ring composed of four proteins forming translocation channels, and four to five GTP-binding proteins providing energy. This core complex can interact with components of the TIC complex to form a larger import complex. Interacts with ARSA1. It depends on Mg(2+) as a cofactor.

The protein localises to the plastid. It is found in the chloroplast outer membrane. GTPase involved in protein precursor import into chloroplasts. Seems to recognize chloroplast-destined precursor proteins and regulate their presentation to the translocation channel through GTP hydrolysis. Functions as an essential component of the outer chloroplast membrane translocon (TOC) complex, which, in turn, catalyzes the import of nucleus-encoded precursor polypeptides from the cytoplasm to the chloroplast. The polypeptide is Translocase of chloroplast 34 homolog, chloroplastic (Chlamydomonas reinhardtii (Chlamydomonas smithii)).